We begin with the raw amino-acid sequence, 111 residues long: Capsid assembly protein Gp31 (111 aa).

Homoheptamer. Forms a stable complex with groEL in the presence of ATP.

Functionally, essential for proper capsid assembly. In absence of Gp31 the major capsid protein (Gp23) assembles into 'lumps'. Acts as a co-chaperonin with the host groEL protein. The protein is Capsid assembly protein Gp31 (31) of Escherichia coli (Bacteriophage T4).